Here is a 136-residue protein sequence, read N- to C-terminus: Large-conductance mechanosensitive channel (136 aa).

Transmembrane regions (helical) follow at residues 10–30 and 76–96; these read FAMRGNVVDLAVGVIIGAAFG and GSFIQSVFDFVIVALAIFSAV.

This sequence belongs to the MscL family. Homopentamer.

The protein localises to the cell inner membrane. Its function is as follows. Channel that opens in response to stretch forces in the membrane lipid bilayer. May participate in the regulation of osmotic pressure changes within the cell. This is Large-conductance mechanosensitive channel from Yersinia enterocolitica serotype O:8 / biotype 1B (strain NCTC 13174 / 8081).